Reading from the N-terminus, the 847-residue chain is B-cell receptor CD22 (847 aa).

The N-terminal stretch at 1–19 (MHLLGPWLLLLVLEYLAFS) is a signal peptide. The region spanning 20–138 (DSSKWVFEHP…MERIHLNVSE (119 aa)) is the Ig-like V-type domain. Residues 20–687 (DSSKWVFEHP…YYSPETIGRR (668 aa)) are Extracellular-facing. 3 cysteine pairs are disulfide-bonded: C39-C167, C44-C102, and C161-C219. N-linked (GlcNAc...) asparagine glycosylation is found at N67, N101, and N112. R120 is an N-acetylneuraminate binding site. 3 N-linked (GlcNAc...) asparagine glycosylation sites follow: N135, N164, and N231. 6 Ig-like C2-type domains span residues 143–235 (PHIQ…DTVQ), 242–326 (PKLE…VFLQ), 331–416 (PEPS…LDVQ), 419–500 (PKKV…VALN), 505–582 (PRDV…QTAS), and 593–676 (PRRL…STLT). 4 disulfide bridges follow: C265/C309, C353/C396, C442/C484, and C529/C571. 3 N-linked (GlcNAc...) asparagine glycosylation sites follow: N363, N445, and N479. Residues N574 and N634 are each glycosylated (N-linked (GlcNAc...) asparagine). A disulfide bridge links C616 with C659. A helical transmembrane segment spans residues 688-706 (VAVGLGSCLAILILAICGL). The Cytoplasmic segment spans residues 707-847 (KLQRRWKRTQ…ENVDYVILKH (141 aa)). 3 positions are modified to phosphoserine: S725, S726, and S729. 2 short sequence motifs (ITIM motif) span residues 760 to 765 (ISYTTL) and 794 to 799 (VTYSAL). Y762 is modified (phosphotyrosine). A phosphotyrosine mark is found at Y807, Y822, and Y842. Short sequence motifs (ITIM motif) lie at residues 820–825 (IHYSEL) and 840–845 (VDYVIL).

The protein belongs to the immunoglobulin superfamily. SIGLEC (sialic acid binding Ig-like lectin) family. Predominantly monomer of isoform CD22-beta. Also found as heterodimer of isoform CD22-beta and a shorter isoform. Interacts with PTPN6/SHP-1, LYN, SYK, PIK3R1/PIK3R2 and PLCG1 upon phosphorylation. Interacts with GRB2, INPP5D and SHC1 upon phosphorylation. May form a complex with INPP5D/SHIP, GRB2 and SHC1. In terms of processing, phosphorylation of Tyr-762, Tyr-807 and Tyr-822 are involved in binding to SYK, GRB2 and SYK, respectively. Phosphorylation of Tyr-842 is involved in binding to SYK, PLCG2 and PIK3R1/PIK3R2. Phosphorylated on tyrosine residues by LYN. In terms of tissue distribution, B-lymphocytes.

It localises to the cell membrane. Most highly expressed siglec (sialic acid-binding immunoglobulin-like lectin) on B-cells that plays a role in various aspects of B-cell biology including differentiation, antigen presentation, and trafficking to bone marrow. Binds to alpha 2,6-linked sialic acid residues of surface molecules such as CD22 itself, CD45 and IgM in a cis configuration. Can also bind to ligands on other cells as an adhesion molecule in a trans configuration. Acts as an inhibitory coreceptor on the surface of B-cells and inhibits B-cell receptor induced signaling, characterized by inhibition of the calcium mobilization and cellular activation. Mechanistically, the immunoreceptor tyrosine-based inhibitory motif domain is phosphorylated by the Src kinase LYN, which in turn leads to the recruitment of the protein tyrosine phosphatase 1/PTPN6, leading to the negative regulation of BCR signaling. If this negative signaling from is of sufficient strength, apoptosis of the B-cell can be induced. This chain is B-cell receptor CD22, found in Homo sapiens (Human).